We begin with the raw amino-acid sequence, 594 residues long: Aspartate--tRNA(Asp/Asn) ligase (594 aa).

Glu176 contacts L-aspartate. The segment at 200-203 (QIFK) is aspartate. Arg222 serves as a coordination point for L-aspartate. Residues 222 to 224 (RDE) and Gln231 contribute to the ATP site. His450 provides a ligand contact to L-aspartate. Glu484 lines the ATP pocket. Position 491 (Arg491) interacts with L-aspartate. 536–539 (GLDR) lines the ATP pocket.

It belongs to the class-II aminoacyl-tRNA synthetase family. Type 1 subfamily. In terms of assembly, homodimer.

Its subcellular location is the cytoplasm. The enzyme catalyses tRNA(Asx) + L-aspartate + ATP = L-aspartyl-tRNA(Asx) + AMP + diphosphate. Its function is as follows. Aspartyl-tRNA synthetase with relaxed tRNA specificity since it is able to aspartylate not only its cognate tRNA(Asp) but also tRNA(Asn). Reaction proceeds in two steps: L-aspartate is first activated by ATP to form Asp-AMP and then transferred to the acceptor end of tRNA(Asp/Asn). This Geobacillus sp. (strain WCH70) protein is Aspartate--tRNA(Asp/Asn) ligase.